The following is a 364-amino-acid chain: Protein-glutamate methylesterase/protein-glutamine glutaminase (364 aa).

The region spanning 7–124 (RALIVDDSAL…SQNMPDMAEE (118 aa)) is the Response regulatory domain. D58 carries the 4-aspartylphosphate modification. The 198-residue stretch at 167–364 (ETTSFVRNVL…MAEEIVKIIS (198 aa)) folds into the CheB-type methylesterase domain. Active-site residues include S181, H208, and D308.

It belongs to the CheB family. Phosphorylated by CheA. Phosphorylation of the N-terminal regulatory domain activates the methylesterase activity.

Its subcellular location is the cytoplasm. It catalyses the reaction [protein]-L-glutamate 5-O-methyl ester + H2O = L-glutamyl-[protein] + methanol + H(+). It carries out the reaction L-glutaminyl-[protein] + H2O = L-glutamyl-[protein] + NH4(+). Functionally, involved in chemotaxis. Part of a chemotaxis signal transduction system that modulates chemotaxis in response to various stimuli. Catalyzes the demethylation of specific methylglutamate residues introduced into the chemoreceptors (methyl-accepting chemotaxis proteins or MCP) by CheR. Also mediates the irreversible deamidation of specific glutamine residues to glutamic acid. This Methanosarcina barkeri (strain Fusaro / DSM 804) protein is Protein-glutamate methylesterase/protein-glutamine glutaminase.